The primary structure comprises 164 residues: Thiol peroxidase (164 aa).

Positions 18 to 163 constitute a Thioredoxin domain; the sequence is INEGDFAPDF…FDAALAAYKN (146 aa). C60 acts as the Cysteine sulfenic acid (-SOH) intermediate in catalysis. C60 and C93 are disulfide-bonded.

Belongs to the peroxiredoxin family. Tpx subfamily. Homodimer.

The enzyme catalyses a hydroperoxide + [thioredoxin]-dithiol = an alcohol + [thioredoxin]-disulfide + H2O. Its function is as follows. Thiol-specific peroxidase that catalyzes the reduction of hydrogen peroxide and organic hydroperoxides to water and alcohols, respectively. Plays a role in cell protection against oxidative stress by detoxifying peroxides. The chain is Thiol peroxidase from Staphylococcus aureus (strain COL).